A 78-amino-acid polypeptide reads, in one-letter code: Apolipoprotein C-I (78 aa).

A signal peptide spans 1–26 (MRLILWLPVLVVVLLMVTEGPAPAQG).

Belongs to the apolipoprotein C1 family.

Its subcellular location is the secreted. Functionally, inhibitor of lipoprotein binding to the low density lipoprotein (LDL) receptor, LDL receptor-related protein, and very low density lipoprotein (VLDL) receptor. Associates with high density lipoproteins (HDL) and the triacylglycerol-rich lipoproteins in the plasma and makes up about 10% of the protein of the VLDL and 2% of that of HDL. Appears to interfere directly with fatty acid uptake and is also the major plasma inhibitor of cholesteryl ester transfer protein (CETP). Binds free fatty acids and reduces their intracellular esterification. Modulates the interaction of APOE with beta-migrating VLDL and inhibits binding of beta-VLDL to the LDL receptor-related protein. The chain is Apolipoprotein C-I (APOC1) from Panthera tigris altaica (Siberian tiger).